We begin with the raw amino-acid sequence, 372 residues long: uncharacterized protein (372 aa).

An N-terminal signal peptide occupies residues M1–S19. The N-linked (GlcNAc...) asparagine glycan is linked to N18. One can recognise an MRH domain in the interval S20–I160. A disulfide bridge connects residues C22 and C58. N59 carries N-linked (GlcNAc...) asparagine glycosylation. A disulfide bond links C128 and C158. A coiled-coil region spans residues N185–I282. Positions K201–N233 are disordered. Residues N206–N230 are compositionally biased toward low complexity.

It localises to the secreted. This is an uncharacterized protein from Dictyostelium discoideum (Social amoeba).